A 59-amino-acid chain; its full sequence is Potassium channel toxin alpha-KTx 3.5 (59 aa).

A signal peptide spans 1–22 (MKVFSAVLIILFVCSMIIGINA). 3 cysteine pairs are disulfide-bonded: cysteine 29–cysteine 49, cysteine 35–cysteine 54, and cysteine 39–cysteine 56. An interaction with Ca(2+)-activated K(+) channels region spans residues 47–54 (GKCMNGKC).

It belongs to the short scorpion toxin superfamily. Potassium channel inhibitor family. Alpha-KTx 03 subfamily. As to expression, expressed by the venom gland.

It is found in the secreted. Its function is as follows. Has also been shown to inhibit with high potency Kv1.3/KCNA3 and with low potency Kv1.1/KCNA1 and Kv1.2/KCNA2 voltage-gated potassium channels. Also binds and inhibits the molluscan calcium-activated potassium channels KCa (Kd=135 nM). The sequence is that of Potassium channel toxin alpha-KTx 3.5 (KTX2) from Androctonus australis (Sahara scorpion).